Consider the following 501-residue polypeptide: 25-hydroxyvitamin D-1 alpha hydroxylase, mitochondrial (501 aa).

Residue C448 participates in heme binding.

It belongs to the cytochrome P450 family. The cofactor is heme. In terms of tissue distribution, kidney.

The protein resides in the mitochondrion membrane. It catalyses the reaction calcidiol + 2 reduced [adrenodoxin] + O2 + 2 H(+) = calcitriol + 2 oxidized [adrenodoxin] + H2O. The enzyme catalyses secalciferol + 2 reduced [adrenodoxin] + O2 + 2 H(+) = calcitetrol + 2 oxidized [adrenodoxin] + H2O. The protein operates within hormone biosynthesis; cholecalciferol biosynthesis. Its function is as follows. Catalyzes the conversion of 25-hydroxyvitamin D3 (25(OH)D3) to 1-alpha,25-dihydroxyvitamin D3 (1alpha,25(OH)(2)D3), and of 24,25-dihydroxyvitamin D3 (24,25(OH)(2)D3) to 1-alpha,24,25-trihydroxyvitamin D3 (1alpha,24,25(OH)(3)D3). Is also active with 25-hydroxy-24-oxo-vitamin D3. Plays an important role in normal bone growth, calcium metabolism, and tissue differentiation. This chain is 25-hydroxyvitamin D-1 alpha hydroxylase, mitochondrial (Cyp27b1), found in Rattus norvegicus (Rat).